A 76-amino-acid chain; its full sequence is Defensin-like protein 71 (76 aa).

Residues 1 to 22 (MAMTQVFVIFILLATSLCNSNA) form the signal peptide. 4 cysteine pairs are disulfide-bonded: Cys-36–Cys-74, Cys-40–Cys-63, Cys-49–Cys-72, and Cys-53–Cys-73.

It belongs to the DEFL family.

The protein localises to the secreted. The protein is Defensin-like protein 71 (LCR84) of Arabidopsis thaliana (Mouse-ear cress).